A 428-amino-acid polypeptide reads, in one-letter code: Enolase (428 aa).

Residue Gln-163 participates in (2R)-2-phosphoglycerate binding. Glu-205 (proton donor) is an active-site residue. Mg(2+)-binding residues include Asp-242, Glu-286, and Asp-313. (2R)-2-phosphoglycerate is bound by residues Lys-338, Arg-367, Ser-368, and Lys-389. The active-site Proton acceptor is the Lys-338.

This sequence belongs to the enolase family. It depends on Mg(2+) as a cofactor.

The protein localises to the cytoplasm. It is found in the secreted. It localises to the cell surface. It carries out the reaction (2R)-2-phosphoglycerate = phosphoenolpyruvate + H2O. It participates in carbohydrate degradation; glycolysis; pyruvate from D-glyceraldehyde 3-phosphate: step 4/5. Functionally, catalyzes the reversible conversion of 2-phosphoglycerate (2-PG) into phosphoenolpyruvate (PEP). It is essential for the degradation of carbohydrates via glycolysis. This is Enolase from Acidovorax ebreus (strain TPSY) (Diaphorobacter sp. (strain TPSY)).